A 1320-amino-acid chain; its full sequence is Transcriptional activator MN1 (1320 aa).

Methionine 1 carries the post-translational modification N-acetylmethionine. Disordered stretches follow at residues 1-26, 92-121, 147-219, 231-411, 423-442, 474-615, 629-819, 840-1150, and 1247-1273; these read MFGL…FNET, FGGQ…FGGP, PPFA…SLEP, LEYN…EYPI, SEPV…NQRL, NGSM…AGRL, SAWF…KDNL, GAPN…PDEI, and PWEK…SASQ. A compositionally biased stretch (basic residues) spans 98-113; that stretch reads HHGHPGSHHPHQHHPH. Composition is skewed to low complexity over residues 202 to 214 and 291 to 309; these read SFHG…GSDS and QPPQ…QQQQ. The segment covering 338–366 has biased composition (pro residues); it reads MQPPQQAPPPPQQQPPQQPPQQQPPPPPG. Pro residues predominate over residues 498–514; sequence FTPPVPDSFPSGPPLQH. Low complexity-rich tracts occupy residues 523–550 and 564–578; these read QQQQ…QQQQ and RNQQ…LAQL. Gly residues-rich tracts occupy residues 582–596 and 701–710; these read GDVG…GPVG and QFGGSLGGLG. Residues 759 to 768 show a composition bias toward low complexity; sequence SGPGVNSPPS. Residues 769 to 784 show a composition bias toward gly residues; it reads AGGGGGSSGGGGGGGA. Composition is skewed to low complexity over residues 798 to 809 and 895 to 905; these read SASKLGALSLGS and GTSSSGSKASG. Positions 914–930 are enriched in polar residues; that stretch reads DGTSLSPNYTLESTSGN. A phosphoserine mark is found at serine 950 and serine 954. Positions 973–984 are enriched in low complexity; sequence GVSPGQQQASGA. Position 1007 is a phosphoserine (serine 1007). Polar residues predominate over residues 1048 to 1066; the sequence is EVSTSYANEDEVSSSSDNP. At serine 1081 the chain carries Phosphoserine. Gly residues predominate over residues 1118–1128; that stretch reads YGGGGGPGHPG.

In terms of assembly, interacts with PBX1, PKNOX1, ZBTB24, E2F7, RING1. In terms of tissue distribution, widely expressed in fetal and adult tissues. Highest expression is observed in fetal brain and skeletal muscle, and adult skeletal muscle.

The protein resides in the nucleus. In terms of biological role, transcriptional activator which specifically regulates expression of TBX22 in the posterior region of the developing palate. Required during later stages of palate development for growth and medial fusion of the palatal shelves. Promotes maturation and normal function of calvarial osteoblasts, including expression of the osteoclastogenic cytokine TNFSF11/RANKL. Necessary for normal development of the membranous bones of the skull. May play a role in tumor suppression. This is Transcriptional activator MN1 (MN1) from Homo sapiens (Human).